Consider the following 439-residue polypeptide: Chitinase-like protein Idgf1 (439 aa).

Residues 1-20 (MRFQLFYILGLLSVTSLTQA) form the signal peptide. Positions 22-439 (NNLVCYYDST…IVRSIKYFMG (418 aa)) constitute a GH18 domain. Residues C26 and C53 are joined by a disulfide bond. 3 N-linked (GlcNAc...) asparagine glycosylation sites follow: N122, N218, and N346. Cysteines 340 and 423 form a disulfide.

This sequence belongs to the glycosyl hydrolase 18 family. IDGF subfamily. In terms of processing, glycosylated.

It is found in the secreted. Cooperates with insulin-like peptides to stimulate the proliferation, polarization and motility of imaginal disk cells. May act by stabilizing the binding of insulin-like peptides to its receptor through a simultaneous interaction with both molecules to form a multiprotein signaling complex. This is Chitinase-like protein Idgf1 (Idgf1) from Drosophila simulans (Fruit fly).